Reading from the N-terminus, the 340-residue chain is Glycerol-3-phosphate dehydrogenase [NAD(P)+] (340 aa).

Serine 14, phenylalanine 15, arginine 35, and lysine 108 together coordinate NADPH. Sn-glycerol 3-phosphate contacts are provided by lysine 108 and glycine 136. Alanine 140 is an NADPH binding site. The sn-glycerol 3-phosphate site is built by lysine 191, aspartate 244, serine 254, arginine 255, and asparagine 256. Catalysis depends on lysine 191, which acts as the Proton acceptor. Arginine 255 is a binding site for NADPH. An NADPH-binding site is contributed by glutamate 281.

The protein belongs to the NAD-dependent glycerol-3-phosphate dehydrogenase family.

It is found in the cytoplasm. The enzyme catalyses sn-glycerol 3-phosphate + NAD(+) = dihydroxyacetone phosphate + NADH + H(+). It catalyses the reaction sn-glycerol 3-phosphate + NADP(+) = dihydroxyacetone phosphate + NADPH + H(+). Its pathway is membrane lipid metabolism; glycerophospholipid metabolism. Its function is as follows. Catalyzes the reduction of the glycolytic intermediate dihydroxyacetone phosphate (DHAP) to sn-glycerol 3-phosphate (G3P), the key precursor for phospholipid synthesis. The polypeptide is Glycerol-3-phosphate dehydrogenase [NAD(P)+] (Pseudomonas aeruginosa (strain ATCC 15692 / DSM 22644 / CIP 104116 / JCM 14847 / LMG 12228 / 1C / PRS 101 / PAO1)).